A 447-amino-acid chain; its full sequence is Tubulin beta chain (447 aa).

Residues Q11, E69, S138, G142, T143, G144, N204, and N226 each coordinate GTP. Position 69 (E69) interacts with Mg(2+).

This sequence belongs to the tubulin family. In terms of assembly, dimer of alpha and beta chains. A typical microtubule is a hollow water-filled tube with an outer diameter of 25 nm and an inner diameter of 15 nM. Alpha-beta heterodimers associate head-to-tail to form protofilaments running lengthwise along the microtubule wall with the beta-tubulin subunit facing the microtubule plus end conferring a structural polarity. Microtubules usually have 13 protofilaments but different protofilament numbers can be found in some organisms and specialized cells. It depends on Mg(2+) as a cofactor.

It is found in the cytoplasm. The protein localises to the cytoskeleton. Tubulin is the major constituent of microtubules, a cylinder consisting of laterally associated linear protofilaments composed of alpha- and beta-tubulin heterodimers. Microtubules grow by the addition of GTP-tubulin dimers to the microtubule end, where a stabilizing cap forms. Below the cap, tubulin dimers are in GDP-bound state, owing to GTPase activity of alpha-tubulin. This chain is Tubulin beta chain (TUB2), found in Penicillium digitatum (Green mold).